Reading from the N-terminus, the 421-residue chain is 3-hydroxy-3-methylglutaryl-coenzyme A reductase (421 aa).

Active-site charge relay system residues include glutamate 109, lysine 240, and aspartate 315. Residue histidine 410 is the Proton donor of the active site.

It belongs to the HMG-CoA reductase family.

It carries out the reaction (R)-mevalonate + 2 NADP(+) + CoA = (3S)-3-hydroxy-3-methylglutaryl-CoA + 2 NADPH + 2 H(+). The protein operates within metabolic intermediate biosynthesis; (R)-mevalonate biosynthesis; (R)-mevalonate from acetyl-CoA: step 3/3. Converts HMG-CoA to mevalonate. The protein is 3-hydroxy-3-methylglutaryl-coenzyme A reductase (hmgA) of Aeropyrum pernix (strain ATCC 700893 / DSM 11879 / JCM 9820 / NBRC 100138 / K1).